A 540-amino-acid polypeptide reads, in one-letter code: MHSKKSIQGSETVEQVSIEAPGSSSPQSNHNSSSDDEQDVQDDISQSDSDSLDSQASRKRRKTSQVLEDGDIPLIATTSVPSRVKAKSQNNLLEPKNFNNGAVLAPTDAQTTFAALDVKPWLVASLGAMAIKRPTGIQKGCIPEILKGRDCIGGSRTGSGKTVAFAVPILQKWAEDPFGIFALVLTPTRELALQIYEQFKAISSPQSLKAVLITGGSDMRPQATALAQRPHVVIATPGRLADHIRTSGEDTVCALRRVRMVVLDEADRLLASGSVGSMLPDVEECLSLLPPPSERQTLLFTATVTPEVRALKDMPRTLGKPPVFVCEVDTQALAIPSSLNQMHLQVPVTHREHYLHMFLLTEKNLPKSIVIFCNRTATADYLTHLLRLLEHRVTALHSKLPQRQRIDNLGRFRASAARILVATDVAARGLDIPEVGLVINYDVPRDPDDYIHRVGRTARAGRKGEAVTFVGQRDVQLILAIEKRVGRQMEAWTEEGVNLETRVIRESLKLVGEKKREAMLEIEEGREVGGKRKRGMKKLS.

A compositionally biased stretch (polar residues) spans 1-15 (MHSKKSIQGSETVEQ). Positions 1–65 (MHSKKSIQGS…ASRKRRKTSQ (65 aa)) are disordered. Low complexity-rich tracts occupy residues 23–32 (SSSPQSNHNS) and 43–55 (DISQ…LDSQ). The short motif at 111 to 139 (TTFAALDVKPWLVASLGAMAIKRPTGIQK) is the Q motif element. Positions 142–322 (IPEILKGRDC…DMPRTLGKPP (181 aa)) constitute a Helicase ATP-binding domain. 155 to 162 (SRTGSGKT) is an ATP binding site. Positions 264–267 (DEAD) match the DEAD box motif. A Helicase C-terminal domain is found at 354-505 (YLHMFLLTEK…GVNLETRVIR (152 aa)).

Belongs to the DEAD box helicase family. DDX49/DBP8 subfamily.

It is found in the nucleus. It localises to the nucleolus. The enzyme catalyses ATP + H2O = ADP + phosphate + H(+). In terms of biological role, ATP-binding RNA helicase involved in 40S ribosomal subunit biogenesis and is required for the normal formation of 18S rRNAs through pre-rRNA processing at A0, A1 and A2 sites. Required for vegetative growth. The protein is ATP-dependent RNA helicase dbp8 (dbp8) of Sclerotinia sclerotiorum (strain ATCC 18683 / 1980 / Ss-1) (White mold).